Reading from the N-terminus, the 105-residue chain is MATLTQQKIRIRLKAYDHRLLDTSCDKIVDTARRTEAVPVGPIPLPTRRRLYCVLRSPHTDKDSREHFEVRTHRRIIDIYSPSSKTIDALMKLDLPAGVDIEVKL.

The protein belongs to the universal ribosomal protein uS10 family. Part of the 30S ribosomal subunit.

Involved in the binding of tRNA to the ribosomes. This chain is Small ribosomal subunit protein uS10, found in Synechococcus sp. (strain JA-3-3Ab) (Cyanobacteria bacterium Yellowstone A-Prime).